The sequence spans 329 residues: Cyclin-dependent kinase 7 (329 aa).

In terms of domain architecture, Protein kinase spans 4-287 (NEKLDFLGEG…ASQALRTKYF (284 aa)). Residues 10–18 (LGEGQFATV) and Lys33 each bind ATP. Asp129 acts as the Proton acceptor in catalysis. Ser156 carries the phosphoserine; by CDK1 and CDK2 modification. The residue at position 162 (Thr162) is a Phosphothreonine. Residues 309–329 (LKEQSNPAMATKRKRAEALEQ) are disordered. Ser313 is modified (phosphoserine).

The protein belongs to the protein kinase superfamily. CMGC Ser/Thr protein kinase family. CDC2/CDKX subfamily. As to quaternary structure, associates primarily with cyclin-H (CCNH) and MAT1 to form the CAK complex. CAK can further associate with the core-TFIIH to form the TFIIH basal transcription factor; this complex is sensitive to UV light. The CAK complex binds to p53/TP53 in response to DNA damage. Interacts with CDK2, SF1/NR5A1, PUF60 and PRKCI. Interacts with HINT1. In terms of processing, phosphorylation of Ser-156 during mitosis inactivates the enzyme. Phosphorylation of Thr-162 is required for activity. Phosphorylated at Ser-156 and Thr-162 by CDK2.

The protein localises to the nucleus. The protein resides in the cytoplasm. It localises to the perinuclear region. It catalyses the reaction L-seryl-[protein] + ATP = O-phospho-L-seryl-[protein] + ADP + H(+). It carries out the reaction L-threonyl-[protein] + ATP = O-phospho-L-threonyl-[protein] + ADP + H(+). The catalysed reaction is [DNA-directed RNA polymerase] + ATP = phospho-[DNA-directed RNA polymerase] + ADP + H(+). With respect to regulation, phosphorylation at Thr-162 is required for enzymatic activity. The association of p53/TP53 to the CAK complex in response to DNA damage reduces kinase activity toward CDK2 and RNA polymerase II repetitive C-terminal domain (CTD), thus stopping cell cycle progression. In terms of biological role, serine/threonine kinase involved in cell cycle control and in RNA polymerase II-mediated RNA transcription. Cyclin-dependent kinases (CDKs) are activated by the binding to a cyclin and mediate the progression through the cell cycle. Each different complex controls a specific transition between 2 subsequent phases in the cell cycle. Required for both activation and complex formation of CDK1/cyclin-B during G2-M transition, and for activation of CDK2/cyclins during G1-S transition (but not complex formation). CDK7 is the catalytic subunit of the CDK-activating kinase (CAK) complex. Phosphorylates SPT5/SUPT5H, SF1/NR5A1, POLR2A, p53/TP53, CDK1, CDK2, CDK4, CDK6 and CDK11B/CDK11. Initiates transcription by RNA polymerase II by mediating phosphorylation of POLR2A at 'Ser-5' of the repetitive C-terminal domain (CTD) when POLR2A is in complex with DNA, promoting dissociation from DNA and initiation. CAK activates the cyclin-associated kinases CDK1, CDK2, CDK4 and CDK6 by threonine phosphorylation, thus regulating cell cycle progression. CAK complexed to the core-TFIIH basal transcription factor activates RNA polymerase II by serine phosphorylation of the CTD of POLR2A, allowing its escape from the promoter and elongation of the transcripts. Its expression and activity are constant throughout the cell cycle. Upon DNA damage, triggers p53/TP53 activation by phosphorylation, but is inactivated in turn by p53/TP53; this feedback loop may lead to an arrest of the cell cycle and of the transcription, helping in cell recovery, or to apoptosis. Required for DNA-bound peptides-mediated transcription and cellular growth inhibition. The sequence is that of Cyclin-dependent kinase 7 (Cdk7) from Rattus norvegicus (Rat).